A 247-amino-acid chain; its full sequence is Mast cell protease 2 (247 aa).

An N-terminal signal peptide occupies residues 1-18; that stretch reads MQALLFLMALLLPSGAGA. The propeptide at 19–20 is activation peptide; sequence EE. The Peptidase S1 domain occupies 21–244; that stretch reads IIGGVESIPH…YVPWINAVIN (224 aa). C50 and C66 are joined by a disulfide. Residues H65 and D109 each act as charge relay system in the active site. Cystine bridges form between C143-C208 and C174-C187. S202 (charge relay system) is an active-site residue.

Belongs to the peptidase S1 family. Granzyme subfamily.

In terms of biological role, this enzyme, isolated from small intestine, specifically inactivates the apo forms of a certain group of intracellular pyridoxal phosphate-requiring enzymes. It has chymotrypsin-like specificity towards small substrates. In Rattus norvegicus (Rat), this protein is Mast cell protease 2 (Mcpt2).